The chain runs to 176 residues: Lipoprotein signal peptidase (176 aa).

Helical transmembrane passes span 12 to 32 (WYWMVVLVFIADQLSKQWVLA), 67 to 87 (WQRWFFTFVAVGFSTLLTIWL), and 94 to 116 (MWRLNLAYTLVIGGALGNLIDRL). Active-site residues include Asp123 and Asp141. A helical membrane pass occupies residues 137-157 (FNIADSAICVGAALIIIDSII).

It belongs to the peptidase A8 family.

It localises to the cell inner membrane. It carries out the reaction Release of signal peptides from bacterial membrane prolipoproteins. Hydrolyzes -Xaa-Yaa-Zaa-|-(S,diacylglyceryl)Cys-, in which Xaa is hydrophobic (preferably Leu), and Yaa (Ala or Ser) and Zaa (Gly or Ala) have small, neutral side chains.. It functions in the pathway protein modification; lipoprotein biosynthesis (signal peptide cleavage). Its function is as follows. This protein specifically catalyzes the removal of signal peptides from prolipoproteins. This is Lipoprotein signal peptidase from Shewanella woodyi (strain ATCC 51908 / MS32).